The primary structure comprises 313 residues: Aspartate carbamoyltransferase catalytic subunit (313 aa).

Carbamoyl phosphate-binding residues include Arg-58 and Thr-59. An L-aspartate-binding site is contributed by Lys-86. Carbamoyl phosphate-binding residues include Arg-108, His-136, and Gln-139. Residues Arg-169 and Arg-223 each coordinate L-aspartate. Gly-264 and Pro-265 together coordinate carbamoyl phosphate.

It belongs to the aspartate/ornithine carbamoyltransferase superfamily. ATCase family. In terms of assembly, heterododecamer (2C3:3R2) of six catalytic PyrB chains organized as two trimers (C3), and six regulatory PyrI chains organized as three dimers (R2).

The enzyme catalyses carbamoyl phosphate + L-aspartate = N-carbamoyl-L-aspartate + phosphate + H(+). Its pathway is pyrimidine metabolism; UMP biosynthesis via de novo pathway; (S)-dihydroorotate from bicarbonate: step 2/3. In terms of biological role, catalyzes the condensation of carbamoyl phosphate and aspartate to form carbamoyl aspartate and inorganic phosphate, the committed step in the de novo pyrimidine nucleotide biosynthesis pathway. This is Aspartate carbamoyltransferase catalytic subunit from Ruminiclostridium cellulolyticum (strain ATCC 35319 / DSM 5812 / JCM 6584 / H10) (Clostridium cellulolyticum).